The primary structure comprises 386 residues: Meiotic chromosome segregation protein C1539.02 (386 aa).

3 disordered regions span residues 1 to 28, 46 to 85, and 366 to 386; these read MNQD…SNKS, RALI…SSKQ, and DIHE…KTKG. Polar residues predominate over residues 15-28; the sequence is AETSQLKNFSSNKS.

It is found in the nucleus. Required for meiotic chromosome segregation. The polypeptide is Meiotic chromosome segregation protein C1539.02 (Schizosaccharomyces pombe (strain 972 / ATCC 24843) (Fission yeast)).